The chain runs to 361 residues: S-adenosylmethionine:tRNA ribosyltransferase-isomerase (361 aa).

It belongs to the QueA family. Monomer.

The protein resides in the cytoplasm. The catalysed reaction is 7-aminomethyl-7-carbaguanosine(34) in tRNA + S-adenosyl-L-methionine = epoxyqueuosine(34) in tRNA + adenine + L-methionine + 2 H(+). The protein operates within tRNA modification; tRNA-queuosine biosynthesis. Transfers and isomerizes the ribose moiety from AdoMet to the 7-aminomethyl group of 7-deazaguanine (preQ1-tRNA) to give epoxyqueuosine (oQ-tRNA). This Rhizobium johnstonii (strain DSM 114642 / LMG 32736 / 3841) (Rhizobium leguminosarum bv. viciae) protein is S-adenosylmethionine:tRNA ribosyltransferase-isomerase.